The chain runs to 2178 residues: DNA-directed RNA polymerase subunit beta (2178 aa).

3 insert regions span residues 269 to 325 (SKKI…TPFV), 714 to 1508 (KRID…LFYN), and 1703 to 1900 (KGND…LQPM).

Belongs to the RNA polymerase beta chain family. In plastids the minimal PEP RNA polymerase catalytic core is composed of four subunits: alpha, beta, beta', and beta''. When a (nuclear-encoded) sigma factor is associated with the core the holoenzyme is formed, which can initiate transcription.

The protein localises to the plastid. It is found in the chloroplast. The catalysed reaction is RNA(n) + a ribonucleoside 5'-triphosphate = RNA(n+1) + diphosphate. DNA-dependent RNA polymerase catalyzes the transcription of DNA into RNA using the four ribonucleoside triphosphates as substrates. The sequence is that of DNA-directed RNA polymerase subunit beta from Tupiella akineta (Green alga).